A 233-amino-acid polypeptide reads, in one-letter code: MRNLLPFFTRIPVKGDFERVRNELWALPLLAPLTSALATLVLYLELPLSNVLAILALYFTTGLLHLDGLADWADGVMVKGDRERKIKAMKDLNTGIAGVFAVVMVFLLQVYSLPLLPFYALYLAELNSKFAMLLALATRKPLGQGLGAYFMEGMNGRQLTLGTALYLLLLLPVAYIEPRSISSLLGLLAGAYVIRLSLRNFGGLNGDCIGAVAEITRAGALLGMAVVWVYFGG.

7 helical membrane passes run 24–44 (LWAL…VLYL), 46–66 (LPLS…LLHL), 96–116 (IAGV…LPLL), 117–137 (PFYA…LALA), 158–178 (QLTL…YIEP), 181–198 (ISSL…RLSL), and 209–229 (IGAV…VVWV).

This sequence belongs to the CobS family. Requires Mg(2+) as cofactor.

It is found in the cell membrane. The enzyme catalyses alpha-ribazole + adenosylcob(III)inamide-GDP = adenosylcob(III)alamin + GMP + H(+). The catalysed reaction is alpha-ribazole 5'-phosphate + adenosylcob(III)inamide-GDP = adenosylcob(III)alamin 5'-phosphate + GMP + H(+). It functions in the pathway cofactor biosynthesis; adenosylcobalamin biosynthesis; adenosylcobalamin from cob(II)yrinate a,c-diamide: step 7/7. In terms of biological role, joins adenosylcobinamide-GDP and alpha-ribazole to generate adenosylcobalamin (Ado-cobalamin). Also synthesizes adenosylcobalamin 5'-phosphate from adenosylcobinamide-GDP and alpha-ribazole 5'-phosphate. This chain is Adenosylcobinamide-GDP ribazoletransferase, found in Thermococcus gammatolerans (strain DSM 15229 / JCM 11827 / EJ3).